The sequence spans 197 residues: 3-isopropylmalate dehydratase small subunit (197 aa).

This sequence belongs to the LeuD family. LeuD type 1 subfamily. In terms of assembly, heterodimer of LeuC and LeuD.

It catalyses the reaction (2R,3S)-3-isopropylmalate = (2S)-2-isopropylmalate. It functions in the pathway amino-acid biosynthesis; L-leucine biosynthesis; L-leucine from 3-methyl-2-oxobutanoate: step 2/4. Functionally, catalyzes the isomerization between 2-isopropylmalate and 3-isopropylmalate, via the formation of 2-isopropylmaleate. The protein is 3-isopropylmalate dehydratase small subunit of Streptomyces griseus subsp. griseus (strain JCM 4626 / CBS 651.72 / NBRC 13350 / KCC S-0626 / ISP 5235).